The following is a 165-amino-acid chain: Cyclic pyranopterin monophosphate synthase (165 aa).

Residues 83 to 85 (FCH) and 120 to 121 (ME) contribute to the substrate site. The active site involves Asp135.

Belongs to the MoaC family. Homohexamer; trimer of dimers.

It catalyses the reaction (8S)-3',8-cyclo-7,8-dihydroguanosine 5'-triphosphate = cyclic pyranopterin phosphate + diphosphate. The protein operates within cofactor biosynthesis; molybdopterin biosynthesis. Functionally, catalyzes the conversion of (8S)-3',8-cyclo-7,8-dihydroguanosine 5'-triphosphate to cyclic pyranopterin monophosphate (cPMP). The protein is Cyclic pyranopterin monophosphate synthase of Xanthomonas campestris pv. campestris (strain 8004).